A 388-amino-acid polypeptide reads, in one-letter code: MNVHEFQAKGVLSSFGVTVPRGVVVESVEEVDRLLGDLAPGLVAVKAQIHAGGRGKAGGVKIGKTKDEVKSLVKQMLHSVLITHQTSPEGQKVNKVYLEEGVDIGKEYYISAVVDRSVGRVSIIFSSEGGVDIETVAKERPNMVSVVHVDPLYGFRSFHGQELCRRFGLGPKQVSGVVSMARKIYKVLVETDASQVEINPMAETSSGEFLALDAKIAFDDNGLYRNPEIAKLQDPDEYAAEELEAAKHGLSYIKMDGNIGCMVNGAGLAMATMDIIKYYGGEPANFLDVGGGANQEAVREAFKIILQSGVKGILVNIFGGIMRCDVIAKGIIESTKEIGVDVPLVVRLSGTNFEIGRKLLDDSGLGITAAADLDEAASFIVKMVNERR.

The ATP-grasp domain maps to 9-244; the sequence is KGVLSSFGVT…PDEYAAEELE (236 aa). ATP contacts are provided by residues Lys-46, 53–55, Glu-99, Val-102, and Glu-107; that span reads GRG. Residues Asn-199 and Asp-213 each coordinate Mg(2+). Substrate is bound by residues Asn-264 and 320–322; that span reads GIM.

This sequence belongs to the succinate/malate CoA ligase beta subunit family. In terms of assembly, heterotetramer of two alpha and two beta subunits. Requires Mg(2+) as cofactor.

It carries out the reaction succinate + ATP + CoA = succinyl-CoA + ADP + phosphate. The catalysed reaction is GTP + succinate + CoA = succinyl-CoA + GDP + phosphate. Its pathway is carbohydrate metabolism; tricarboxylic acid cycle; succinate from succinyl-CoA (ligase route): step 1/1. In terms of biological role, succinyl-CoA synthetase functions in the citric acid cycle (TCA), coupling the hydrolysis of succinyl-CoA to the synthesis of either ATP or GTP and thus represents the only step of substrate-level phosphorylation in the TCA. The beta subunit provides nucleotide specificity of the enzyme and binds the substrate succinate, while the binding sites for coenzyme A and phosphate are found in the alpha subunit. This chain is Succinate--CoA ligase [ADP-forming] subunit beta, found in Anaplasma marginale (strain St. Maries).